The sequence spans 131 residues: ATP synthase lipid-binding protein, mitochondrial (131 aa).

The transit peptide at 1–56 directs the protein to the mitochondrion; the sequence is MLSAARLIAPAARSAIFSNAAVVRPLAAVSTQTQLVPAAPAQLSAVRSFQTTSVTK. Residues 72–92 traverse the membrane as a helical segment; that stretch reads VGVAGSGAGIGTVFGSLIIGY. Lys99 bears the N6,N6,N6-trimethyllysine mark. Residues 107-127 form a helical membrane-spanning segment; it reads ILGFALSEAMGLFCLMMAFLL.

The protein belongs to the ATPase C chain family. F-type ATPases have 2 components, CF(1) - the catalytic core - and CF(0) - the membrane proton channel. CF(1) has five subunits: alpha(3), beta(3), gamma(1), delta(1), epsilon(1). CF(0) has three main subunits: a, b and c. Post-translationally, trimethylated by ATPSCKMT at Lys-99. Methylation may be required for proper incorporation of the C subunit into the ATP synthase complex and mitochondrial respiration.

Its subcellular location is the mitochondrion membrane. Its function is as follows. Mitochondrial membrane ATP synthase (F(1)F(0) ATP synthase or Complex V) produces ATP from ADP in the presence of a proton gradient across the membrane which is generated by electron transport complexes of the respiratory chain. F-type ATPases consist of two structural domains, F(1) - containing the extramembraneous catalytic core and F(0) - containing the membrane proton channel, linked together by a central stalk and a peripheral stalk. During catalysis, ATP synthesis in the catalytic domain of F(1) is coupled via a rotary mechanism of the central stalk subunits to proton translocation. Part of the complex F(0) domain. A homomeric c-ring of probably 10 subunits is part of the complex rotary element. The polypeptide is ATP synthase lipid-binding protein, mitochondrial (Manduca sexta (Tobacco hawkmoth)).